Here is a 273-residue protein sequence, read N- to C-terminus: Dermonecrotic toxin LhSicTox-alphaIA2bi (273 aa).

Residues E25 and D27 each contribute to the Mg(2+) site. H41 (nucleophile) is an active-site residue. Disulfide bonds link C45-C51 and C47-C190. D85 lines the Mg(2+) pocket.

Belongs to the arthropod phospholipase D family. Class II subfamily. Requires Mg(2+) as cofactor. As to expression, expressed by the venom gland.

It is found in the secreted. It carries out the reaction an N-(acyl)-sphingosylphosphocholine = an N-(acyl)-sphingosyl-1,3-cyclic phosphate + choline. The catalysed reaction is an N-(acyl)-sphingosylphosphoethanolamine = an N-(acyl)-sphingosyl-1,3-cyclic phosphate + ethanolamine. It catalyses the reaction a 1-acyl-sn-glycero-3-phosphocholine = a 1-acyl-sn-glycero-2,3-cyclic phosphate + choline. The enzyme catalyses a 1-acyl-sn-glycero-3-phosphoethanolamine = a 1-acyl-sn-glycero-2,3-cyclic phosphate + ethanolamine. Functionally, dermonecrotic toxins cleave the phosphodiester linkage between the phosphate and headgroup of certain phospholipids (sphingolipid and lysolipid substrates), forming an alcohol (often choline) and a cyclic phosphate. This toxin acts on sphingomyelin (SM). It may also act on ceramide phosphoethanolamine (CPE), lysophosphatidylcholine (LPC) and lysophosphatidylethanolamine (LPE), but not on lysophosphatidylserine (LPS), and lysophosphatidylglycerol (LPG). It acts by transphosphatidylation, releasing exclusively cyclic phosphate products as second products. Induces dermonecrosis, hemolysis, increased vascular permeability, edema, inflammatory response, and platelet aggregation. This Loxosceles hirsuta (Recluse spider) protein is Dermonecrotic toxin LhSicTox-alphaIA2bi.